Reading from the N-terminus, the 636-residue chain is MSNWKNSVDPAVDYLLPIAKKAGIETAWDRYEAMQPQCGFGELGVCCRICWKGPCRIDPFGNGPQRGVCGADAHTIVARNLIRMIAAGAAAHSEHGRHIALTLLEVGEGHAPAYRIKDEQKLRKIAEKLNLAPAGKDIRQVAKEVALASLDDYSRQKRNVPCNWAKETLTAERVDKLAELGVMPHNIDAVITEIMGRTHVGCDADAVNLLLGGIKGALADYTGMCLSTELSDVIFGTPKPVITQANLGVLKEDAVNIAVHGHNPLLSEIICDVALKMNEEAKKAGAKEGINVVGICCTGNEVMMRRGIPLATNYLSQEMAIITGALDAMVVDVQCIMPALTSVAECFHTEIITTMAENKITGATHIEFREDSAVESAKKIVEVAIEAFKKRDKRKVNIPDCKQTAITGFSAEAIMAVLSKLNANDPLKPLIDNIINGNIQGIALFAGCNNPKAIHDNSFITIAKELAKNNVLMLATGCGAGAFAKNGLMTQEATEAYAGESLKAVLTALGKAAGLNGPLPLVLHMGSCVDNSRAVNVAVAIANKLGVDLDKLPLVASAPEFMSEKAVAIGTWAVTLGIPTHIGIVPQIMGSSVVVEFLTEKAKDLLGGYFIVETNPELAAAKLVAVIKERRRGLGI.

[4Fe-4S] cluster is bound by residues C38, C46, C47, C50, C55, and C69. Positions 262, 297, 335, 448, 478, and 528 each coordinate [Ni-4Fe-5S] cluster.

It belongs to the Ni-containing carbon monoxide dehydrogenase family. In terms of assembly, homodimer. [4Fe-4S] cluster serves as cofactor. The cofactor is [Ni-4Fe-5S] cluster.

It is found in the cytoplasm. Its subcellular location is the cell membrane. The catalysed reaction is CO + 2 oxidized [2Fe-2S]-[ferredoxin] + H2O = 2 reduced [2Fe-2S]-[ferredoxin] + CO2 + 2 H(+). With respect to regulation, inactivated by O(2). CODH oxidizes carbon monoxide coupled, via CooF, to the reduction of a hydrogen cation by a hydrogenase (possibly CooH). In Carboxydothermus hydrogenoformans (strain ATCC BAA-161 / DSM 6008 / Z-2901), this protein is Carbon monoxide dehydrogenase 1 (cooS1).